The chain runs to 98 residues: NADH-ubiquinone oxidoreductase chain 4L (98 aa).

The next 3 helical transmembrane spans lie at 1-21 (MPVV…GLLI), 29-49 (SLLC…VTVL), and 61-81 (IILL…LVMV).

It belongs to the complex I subunit 4L family. In terms of assembly, core subunit of respiratory chain NADH dehydrogenase (Complex I) which is composed of 45 different subunits.

The protein resides in the mitochondrion inner membrane. It catalyses the reaction a ubiquinone + NADH + 5 H(+)(in) = a ubiquinol + NAD(+) + 4 H(+)(out). Core subunit of the mitochondrial membrane respiratory chain NADH dehydrogenase (Complex I) which catalyzes electron transfer from NADH through the respiratory chain, using ubiquinone as an electron acceptor. Part of the enzyme membrane arm which is embedded in the lipid bilayer and involved in proton translocation. In Ursus americanus (American black bear), this protein is NADH-ubiquinone oxidoreductase chain 4L (MT-ND4L).